Consider the following 140-residue polypeptide: uncharacterized protein (140 aa).

Positions 2–140 (KAVIAKNEEQ…GIPHLQMMKD (139 aa)) constitute an N-acetyltransferase domain.

The protein belongs to the acetyltransferase family.

This is an uncharacterized protein from Bacillus subtilis (strain 168).